A 179-amino-acid polypeptide reads, in one-letter code: Replication restart protein DnaT (179 aa).

The disordered stretch occupies residues 156–179 (GGLPKRDVNTVSEPDSQIPPGFRG).

This sequence belongs to the DnaT family. Homooligomerizes. Interacts with PriB. Component of the replication restart primosome. Primosome assembly occurs via a 'hand-off' mechanism. PriA binds to replication forks, subsequently PriB then DnaT bind; DnaT then displaces ssDNA to generate the helicase loading substrate.

Its function is as follows. Involved in the restart of stalled replication forks, which reloads the replicative helicase on sites other than the origin of replication. Can function in multiple replication restart pathways. Displaces ssDNA from a PriB-ssDNA complex. Probably forms a spiral filament on ssDNA. The chain is Replication restart protein DnaT from Escherichia coli (strain ATCC 8739 / DSM 1576 / NBRC 3972 / NCIMB 8545 / WDCM 00012 / Crooks).